A 783-amino-acid chain; its full sequence is Type 4 coupling protein DotL (783 aa).

Residues 47–67 (VSYYFSEAATFLLIMGGIFFL) traverse the membrane as a helical segment. Positions 100-500 (NIARGITFFG…ICMKLEDPTE (401 aa)) are ATPase domain. Residues 671-773 (VEGALTIFSK…SAKISAEREK (103 aa)) form an interaction with IcmS/IcmW region.

As to quaternary structure, the T4BSS is a complex nanomachine composed of several subcomplexes. This subunit is part of the Type IV Coupling Complex (T4CC), a subcomplex composed of the DotLMNYZ core and the IcmSW-LvgA adapter subunits, linked by the C-terminal tail of DotL. Six DotLMNYZ hetero-pentameric units may assemble into a hexameric nanomachine, forming an inner membrane channel for effectors to pass through. Interacts directly with DotM. Interacts directly, via its C-terminal region, with the type IV adapter proteins IcmS and IcmW. Also interacts with DotN and LvgA via its C-terminal region.

It is found in the cell inner membrane. Component of the Dot/Icm type IVB secretion system (T4BSS), which is used to inject bacterial effector proteins into eukaryotic host cells. Part of a subcomplex which recruits effector proteins and delivers them to the core transmembrane subcomplex. Plays a central role in the assembly of the subcomplex. Required for the recruitment of IcmS and IcmW to the inner membrane and for the translocation of adapter-dependent substrates. May have ATPase activity. The protein is Type 4 coupling protein DotL of Legionella pneumophila subsp. pneumophila (strain Philadelphia 1 / ATCC 33152 / DSM 7513).